The sequence spans 274 residues: MASLNSALRTAQHVRTATRGALLWGYEQKLAREVKANGKLPRHLGLILDGNRRFARAAGLQREMGHSFGADKAHEVLQWCLELGIPSATIWVLSTDNGSREPAELAHILSLLEREARQLAVDPRIHANRVRVRAIGQHDNFPPQVLAALNNLEESTAGYEGMRLNIAVGYGGREEIVDAVQSYLRTQAAQGATLEQAAENLTPDAIGAHLYAADQPDPDFIIRTSGEIRLSGFMLWQSVYSEYYFCDVYWPGFRRVDFLRALRDFQGRDRRFGK.

Residue Asp49 is part of the active site. Position 49 (Asp49) interacts with Mg(2+). Substrate contacts are provided by residues Gly50–Arg53, Phe54, Arg62, His66, and Ser94–Asp96. Asn97 functions as the Proton acceptor in the catalytic mechanism. Substrate contacts are provided by residues Arg100, Arg223, and Arg229–Ser231. Residue Glu242 coordinates Mg(2+).

It belongs to the UPP synthase family. As to quaternary structure, homodimer. Mg(2+) serves as cofactor.

Functionally, catalyzes the condensation of isopentenyl diphosphate (IPP) with allylic pyrophosphates generating different type of terpenoids. This chain is Isoprenyl transferase, found in Deinococcus radiodurans (strain ATCC 13939 / DSM 20539 / JCM 16871 / CCUG 27074 / LMG 4051 / NBRC 15346 / NCIMB 9279 / VKM B-1422 / R1).